A 212-amino-acid chain; its full sequence is 2,3-bisphosphoglycerate-dependent phosphoglycerate mutase (212 aa).

Residues 9–16, 22–23, R61, 88–91, K99, 115–116, and 159–160 each bind substrate; these read RHGQSEWN, TG, ERDY, RR, and GN. H10 serves as the catalytic Tele-phosphohistidine intermediate. E88 functions as the Proton donor/acceptor in the catalytic mechanism.

It belongs to the phosphoglycerate mutase family. BPG-dependent PGAM subfamily. In terms of assembly, homodimer.

The enzyme catalyses (2R)-2-phosphoglycerate = (2R)-3-phosphoglycerate. It participates in carbohydrate degradation; glycolysis; pyruvate from D-glyceraldehyde 3-phosphate: step 3/5. In terms of biological role, catalyzes the interconversion of 2-phosphoglycerate and 3-phosphoglycerate. The sequence is that of 2,3-bisphosphoglycerate-dependent phosphoglycerate mutase from Methylobacterium radiotolerans (strain ATCC 27329 / DSM 1819 / JCM 2831 / NBRC 15690 / NCIMB 10815 / 0-1).